Consider the following 908-residue polypeptide: Protein translocase subunit SecA (908 aa).

ATP-binding positions include Gln-87, 105 to 109 (GEGKT), and Asp-511. Residues 559 to 570 (ERHESRRIDNQL) show a composition bias toward basic and acidic residues. Disordered regions lie at residues 559–582 (ERHE…DPGS) and 841–908 (RRRR…GRLE). Residues 847–856 (LAQQMQRAQA) show a composition bias toward low complexity. Residues 862 to 873 (TEEDSDAEEQAE) are compositionally biased toward acidic residues. Zn(2+)-binding residues include Cys-892, Cys-894, Cys-903, and His-904. The span at 898 to 908 (KKYKQCHGRLE) shows a compositional bias: basic residues.

The protein belongs to the SecA family. In terms of assembly, monomer and homodimer. Part of the essential Sec protein translocation apparatus which comprises SecA, SecYEG and auxiliary proteins SecDF-YajC and YidC. The cofactor is Zn(2+).

The protein resides in the cell inner membrane. Its subcellular location is the cytoplasm. It catalyses the reaction ATP + H2O + cellular proteinSide 1 = ADP + phosphate + cellular proteinSide 2.. Its function is as follows. Part of the Sec protein translocase complex. Interacts with the SecYEG preprotein conducting channel. Has a central role in coupling the hydrolysis of ATP to the transfer of proteins into and across the cell membrane, serving both as a receptor for the preprotein-SecB complex and as an ATP-driven molecular motor driving the stepwise translocation of polypeptide chains across the membrane. The chain is Protein translocase subunit SecA from Hahella chejuensis (strain KCTC 2396).